The chain runs to 299 residues: Hemolysin C homolog (299 aa).

CBS domains lie at 80-142 (MVPR…NGRL) and 145-202 (LIRK…IDDE).

The protein belongs to the UPF0053 family. Hemolysin C subfamily.

This Rickettsia massiliae (strain Mtu5) protein is Hemolysin C homolog (tlyC).